The chain runs to 540 residues: uncharacterized protein (540 aa).

Over 1–61 (MFSIFKKKTS…TNDSPWQDPT (61 aa)) the chain is Cytoplasmic. Residues 62-82 (YFSSFGKELMFIATCMLAQLL) traverse the membrane as a helical segment. Over 83–108 (NQAGQTHALCIMNVLSKSFNSEANNQ) the chain is Extracellular. A helical membrane pass occupies residues 109–129 (AWLMASFPLAAGSFILISGRL). Over 130 to 131 (GD) the chain is Cytoplasmic. The chain crosses the membrane as a helical span at residues 132-152 (IYGLKKMLIVGYVIVIVWSII). The Extracellular portion of the chain corresponds to 153–169 (SGLSKYSNSDAFFITSR). The chain crosses the membrane as a helical span at residues 170-190 (AFQGVGIAFILPNIMGLVGHV). Residues 191–203 (YKVGSFRKNIVIS) are Cytoplasmic-facing. A helical transmembrane segment spans residues 204-224 (FIGACAPTGGMFGGLFGGLIV). The Extracellular portion of the chain corresponds to 225-232 (TEDPNQWP). The helical transmembrane segment at 233-253 (WVFYAFGIATFLSLLMAWYSI) threads the bilayer. Residues 254-272 (PNNVPTNIHGLSMDWTGSA) lie on the Cytoplasmic side of the membrane. Residues 273-293 (LAIIGLILFNFVWNQAPIVGW) traverse the membrane as a helical segment. The Extracellular portion of the chain corresponds to 294–295 (DK). Residues 296 to 316 (PYIIVLLIISVIFLVAFFVYE) form a helical membrane-spanning segment. Residues 317 to 334 (SKYAEVPLLPRAMTKNRH) are Cytoplasmic-facing. A helical transmembrane segment spans residues 335–355 (MIMILLAVFLGWGSFGIWTFY). At 356–372 (YVSFQLNLRHYSPVWTG) the chain is on the extracellular side. The helical transmembrane segment at 373-393 (GTYFVFVIFGSMAAFFVAFSI) threads the bilayer. At 394-398 (KRLGP) the chain is on the cytoplasmic side. Residues 399 to 419 (ALLLCFSLMAFDAGSIMFSVL) traverse the membrane as a helical segment. The Extracellular segment spans residues 420-429 (PVEQSYWKLN). Residues 430-450 (FAMQAILCFGMDLSFPASSII) form a helical membrane-spanning segment. The Cytoplasmic portion of the chain corresponds to 451-461 (LSDGLPMQYQG). The helical transmembrane segment at 462–482 (MAGSLVNTVINYSASLCLGMG) threads the bilayer. At 483-502 (GTVEHQINKSGNDLLKGYRA) the chain is on the extracellular side. The helical transmembrane segment at 503 to 523 (AVYLGVGLASLGVVISVTYML) threads the bilayer. Residues 524 to 540 (ENLWNRHRKSEDRSLEA) lie on the Cytoplasmic side of the membrane.

The protein belongs to the major facilitator superfamily.

The protein localises to the membrane. This is an uncharacterized protein from Saccharomyces cerevisiae (strain ATCC 204508 / S288c) (Baker's yeast).